Reading from the N-terminus, the 170-residue chain is UPF0251 protein MA_1017 (170 aa).

This sequence belongs to the UPF0251 family.

The sequence is that of UPF0251 protein MA_1017 from Methanosarcina acetivorans (strain ATCC 35395 / DSM 2834 / JCM 12185 / C2A).